The chain runs to 462 residues: Juvenile hormone epoxide hydrolase (462 aa).

A helical membrane pass occupies residues 4 to 24; the sequence is ILSSFVAGVAIGSGLVITYVL. The active-site Nucleophile is the D227. The active-site Proton donor is Y372. H428 (proton acceptor) is an active-site residue.

This sequence belongs to the peptidase S33 family.

Its subcellular location is the microsome membrane. It localises to the endoplasmic reticulum membrane. It catalyses the reaction cis-stilbene oxide + H2O = (1R,2R)-hydrobenzoin. The catalysed reaction is 1-(4-methoxyphenyl)-N-methyl-N-[(3-methyloxetan-3-yl)methyl]methanamine + H2O = 2-{[(4-methoxybenzyl)(methyl)amino]methyl}-2-methylpropane-1,3-diol. In terms of biological role, catalyzes juvenile hormone hydrolysis. This is Juvenile hormone epoxide hydrolase from Manduca sexta (Tobacco hawkmoth).